The primary structure comprises 450 residues: Phosphoglucosamine mutase (450 aa).

Ser-102 acts as the Phosphoserine intermediate in catalysis. Ser-102, Asp-243, Asp-245, and Asp-247 together coordinate Mg(2+). A Phosphoserine modification is found at Ser-102.

The protein belongs to the phosphohexose mutase family. Mg(2+) is required as a cofactor. Post-translationally, activated by phosphorylation.

It carries out the reaction alpha-D-glucosamine 1-phosphate = D-glucosamine 6-phosphate. Its function is as follows. Catalyzes the conversion of glucosamine-6-phosphate to glucosamine-1-phosphate. The chain is Phosphoglucosamine mutase from Agrobacterium fabrum (strain C58 / ATCC 33970) (Agrobacterium tumefaciens (strain C58)).